We begin with the raw amino-acid sequence, 120 residues long: MRKSYRVKKEQDFQTVFDASQSVANRNFVVYRLDKPGQKHFRVGLSVGKKVGNAVMRNQVKRYIRQSITELKPDLLQPVDFLVIARRGANQLTMAETKQNLIHVFKLAKLLKEEADSASE.

Belongs to the RnpA family. Consists of a catalytic RNA component (M1 or rnpB) and a protein subunit.

It carries out the reaction Endonucleolytic cleavage of RNA, removing 5'-extranucleotides from tRNA precursor.. In terms of biological role, RNaseP catalyzes the removal of the 5'-leader sequence from pre-tRNA to produce the mature 5'-terminus. It can also cleave other RNA substrates such as 4.5S RNA. The protein component plays an auxiliary but essential role in vivo by binding to the 5'-leader sequence and broadening the substrate specificity of the ribozyme. This is Ribonuclease P protein component from Latilactobacillus sakei subsp. sakei (strain 23K) (Lactobacillus sakei subsp. sakei).